Here is a 132-residue protein sequence, read N- to C-terminus: Fatty acid-binding protein, brain (132 aa).

N-acetylvaline is present on Val-2. 127-129 lines the a fatty acid pocket; that stretch reads RHY.

The protein belongs to the calycin superfamily. Fatty-acid binding protein (FABP) family. As to expression, expressed in brain and other neural tissues.

Its subcellular location is the cytoplasm. Functionally, B-FABP could be involved in the transport of a so far unknown hydrophobic ligand with potential morphogenic activity during CNS development. It is required for the establishment of the radial glial fiber system in developing brain, a system that is necessary for the migration of immature neurons to establish cortical layers. This is Fatty acid-binding protein, brain (FABP7) from Homo sapiens (Human).